A 299-amino-acid chain; its full sequence is ATP phosphoribosyltransferase (299 aa).

This sequence belongs to the ATP phosphoribosyltransferase family. Long subfamily. Mg(2+) serves as cofactor.

It is found in the cytoplasm. It carries out the reaction 1-(5-phospho-beta-D-ribosyl)-ATP + diphosphate = 5-phospho-alpha-D-ribose 1-diphosphate + ATP. It functions in the pathway amino-acid biosynthesis; L-histidine biosynthesis; L-histidine from 5-phospho-alpha-D-ribose 1-diphosphate: step 1/9. Its activity is regulated as follows. Feedback inhibited by histidine. Its function is as follows. Catalyzes the condensation of ATP and 5-phosphoribose 1-diphosphate to form N'-(5'-phosphoribosyl)-ATP (PR-ATP). Has a crucial role in the pathway because the rate of histidine biosynthesis seems to be controlled primarily by regulation of HisG enzymatic activity. The chain is ATP phosphoribosyltransferase from Campylobacter lari (strain RM2100 / D67 / ATCC BAA-1060).